The primary structure comprises 577 residues: Heavy metal-associated isoprenylated plant protein 34 (577 aa).

An HMA domain is found at 9–72 (LQTCVLKVNV…KLSKSGKHAE (64 aa)). 2 residues coordinate a metal cation: C20 and C23. The span at 77 to 87 (GGGGGGGGGKG) shows a compositional bias: gly residues. 2 disordered regions span residues 77 to 136 (GGGG…QPMQ) and 150 to 451 (AAHG…GPGG). A compositionally biased stretch (low complexity) spans 97–106 (NLNMGGNNKP). A compositionally biased stretch (gly residues) spans 118–129 (KAGGGGGGGQNH). Basic and acidic residues predominate over residues 168 to 177 (KDQKKSVKFA). Acidic residues predominate over residues 178–213 (DDEDDEFSEDDYDDEDFSEDDYDDDEFDDDEDDDDE). A compositionally biased stretch (low complexity) spans 227-244 (HMPPNKMMMPNKMMPQMG). 2 stretches are compositionally biased toward gly residues: residues 245-254 (GHHGNGGGPK) and 266-281 (FKGGGGGGKKGGGGGF). Composition is skewed to basic and acidic residues over residues 294-326 (KNGKDGKKGKGGEKGKKEGKENKGGGKTGKTDA) and 344-358 (NGDEKKSAGKKDGHG). 2 stretches are compositionally biased toward gly residues: residues 379–392 (KKGGGGTKGGGHGG) and 420–451 (GIGGGPMGPGGPMGPGGPMGQGGPMGMMGPGG). The residue at position 574 (C574) is a Cysteine methyl ester. The S-farnesyl cysteine moiety is linked to residue C574. A propeptide spans 575 to 577 (SIM) (removed in mature form).

The protein belongs to the HIPP family.

Functionally, heavy-metal-binding protein. This chain is Heavy metal-associated isoprenylated plant protein 34, found in Arabidopsis thaliana (Mouse-ear cress).